We begin with the raw amino-acid sequence, 616 residues long: MDADYGIPRELSDLQKLRSHYHPELPPCLQGTTVRVELRDATTAADPSGEHTIKRFFPHTYGQPLAHFLRATAKVPDAQIITEHPAIRVGVLFCGRQSPGGHNVIWGLHDALKVHNPKNILLGFLGGSEGLFAQKTLEITDDVLATYKNQGGYDMLGRTKDQIRTTEQVNAAMAACKALKLDGLVIIGGVTSNTDAAHLAEKFAETKCLTKVVGVPVTLNGDLKNQFVEANVGFDTICKVNSQLISNVCTDALSAEKYYYFIRLMGRKASHVALECTLQSHPNMVILGEEVAASKLTIFDITQQICDAVQARAEHDKNHGVILLPEGLIESIPEVYALLQEIHGLLRQGVSADKISSQLSPWASALFEFLPHFIRKQLLLHPESDDSAQLSQIETEKLIAHLVETEMNKRLKEGTYKGKKFNAICHFFGYQARGSLPSKFDCDYAYVLGHVCYHILAAGLNGYMATITNLKNPANKWHCGASPISAMMTVKRYGRGPGKASIGVPALHPATVDLRGKSYELLSQNATKFLLDDVYRNPGPLQFDGPGADAKAVSLCVEDQDYIGRIKKLQEYLDKVRTIVKPGCSQDVLKAALSAMASVTDILSVISSPSSVSTPF.

It belongs to the phosphofructokinase type A (PFKA) family. PPi-dependent PFK group II subfamily. Clade 'Long' sub-subfamily. As to quaternary structure, tetramer of two alpha (regulatory) and two beta (catalytic) chains.

It is found in the cytoplasm. Its pathway is carbohydrate degradation; glycolysis; D-glyceraldehyde 3-phosphate and glycerone phosphate from D-glucose: step 3/4. Its activity is regulated as follows. Allosterically activated by fructose 2,6-bisphosphate. Its function is as follows. Regulatory subunit of pyrophosphate--fructose 6-phosphate 1-phosphotransferase. The protein is Pyrophosphate--fructose 6-phosphate 1-phosphotransferase subunit alpha of Solanum tuberosum (Potato).